A 457-amino-acid chain; its full sequence is Putative hexose transporter 12 (457 aa).

Residues 1-2 (MG) lie on the Cytoplasmic side of the membrane. Residues 3–23 (LIVSIFNIGCAIGGIVLSKVG) form a helical membrane-spanning segment. Residues 24–29 (DIYGRR) are Extracellular-facing. Residues 30 to 50 (IGLITVTAIYVVGILIQITSI) form a helical membrane-spanning segment. Residues 51 to 60 (NKWYQYFIGR) are Cytoplasmic-facing. The chain crosses the membrane as a helical span at residues 61-81 (IISGIGVGGIAVLSPMLISEV). The Extracellular portion of the chain corresponds to 82-87 (APKHIR). A helical membrane pass occupies residues 88 to 108 (GTLVQLYQLMGTMGIFLGYCT). Over 109-122 (NYGTKNYHNATQWR) the chain is Cytoplasmic. A helical membrane pass occupies residues 123-143 (VGLGLCFAWATFMVSGMMFVP). At 144 to 247 (ESPRYLIEVG…KSVGLKDSFQ (104 aa)) the chain is on the extracellular side. N194 carries N-linked (GlcNAc...) asparagine glycosylation. A helical transmembrane segment spans residues 248–268 (TSIIIGVVNFFSSFIAVYTIE). Topologically, residues 269–274 (RFGRRT) are cytoplasmic. Residues 275–295 (CLLWGAASMLCCFAVFASVGV) form a helical membrane-spanning segment. At 296–319 (TKLWPQGSSHQDITSQGAGNCMIV) the chain is on the extracellular side. Residues 320-340 (FTMFFIFSFATTWAGGCFVIV) form a helical membrane-spanning segment. The Cytoplasmic segment spans residues 341 to 353 (SETFPLRAKSRGM). Residues 354–374 (AIATAANWMWGFLISFFTPFI) traverse the membrane as a helical segment. Over 375 to 379 (TGAIN) the chain is Extracellular. A helical membrane pass occupies residues 380-400 (FYYGYVFLGCLVFAYFYVFFF). At 401-457 (VPETKGLTLEEVNTMWLEGVPAWKSASWVPPERRTADYDADAIDHDNRPIYKRFFSS) the chain is on the cytoplasmic side.

The protein belongs to the major facilitator superfamily. Sugar transporter (TC 2.A.1.1) family.

Its subcellular location is the membrane. Probable glucose transporter. The sequence is that of Putative hexose transporter 12 (HXT12) from Saccharomyces cerevisiae (strain ATCC 204508 / S288c) (Baker's yeast).